A 486-amino-acid polypeptide reads, in one-letter code: Membrane-bound lytic murein transglycosylase F (486 aa).

The signal sequence occupies residues Met1–Asp29. The tract at residues Lys30–Val267 is non-LT domain. An LT domain region spans residues Asp268 to Leu486. The active site involves Glu314.

In the N-terminal section; belongs to the bacterial solute-binding protein 3 family. It in the C-terminal section; belongs to the transglycosylase Slt family.

The protein localises to the cell outer membrane. It carries out the reaction Exolytic cleavage of the (1-&gt;4)-beta-glycosidic linkage between N-acetylmuramic acid (MurNAc) and N-acetylglucosamine (GlcNAc) residues in peptidoglycan, from either the reducing or the non-reducing ends of the peptidoglycan chains, with concomitant formation of a 1,6-anhydrobond in the MurNAc residue.. Murein-degrading enzyme that degrades murein glycan strands and insoluble, high-molecular weight murein sacculi, with the concomitant formation of a 1,6-anhydromuramoyl product. Lytic transglycosylases (LTs) play an integral role in the metabolism of the peptidoglycan (PG) sacculus. Their lytic action creates space within the PG sacculus to allow for its expansion as well as for the insertion of various structures such as secretion systems and flagella. This chain is Membrane-bound lytic murein transglycosylase F, found in Pseudomonas fluorescens (strain Pf0-1).